We begin with the raw amino-acid sequence, 265 residues long: Adenosylcobinamide-GDP ribazoletransferase (265 aa).

4 helical membrane passes run Leu51 to Phe71, Pro72 to His92, Ile121 to Trp140, and Val203 to Phe223.

It belongs to the CobS family. The cofactor is Mg(2+).

Its subcellular location is the cell inner membrane. The catalysed reaction is alpha-ribazole + adenosylcob(III)inamide-GDP = adenosylcob(III)alamin + GMP + H(+). It catalyses the reaction alpha-ribazole 5'-phosphate + adenosylcob(III)inamide-GDP = adenosylcob(III)alamin 5'-phosphate + GMP + H(+). It participates in cofactor biosynthesis; adenosylcobalamin biosynthesis; adenosylcobalamin from cob(II)yrinate a,c-diamide: step 7/7. Joins adenosylcobinamide-GDP and alpha-ribazole to generate adenosylcobalamin (Ado-cobalamin). Also synthesizes adenosylcobalamin 5'-phosphate from adenosylcobinamide-GDP and alpha-ribazole 5'-phosphate. This Vibrio parahaemolyticus serotype O3:K6 (strain RIMD 2210633) protein is Adenosylcobinamide-GDP ribazoletransferase.